A 337-amino-acid polypeptide reads, in one-letter code: GTP 3',8-cyclase (337 aa).

The 226-residue stretch at 1–226 folds into the Radical SAM core domain; it reads MNRVDYLRIS…REKIRQKWGL (226 aa). Position 8 (arginine 8) interacts with GTP. Residues cysteine 15 and cysteine 19 each coordinate [4Fe-4S] cluster. Tyrosine 21 is a binding site for S-adenosyl-L-methionine. Residue cysteine 22 coordinates [4Fe-4S] cluster. Residue arginine 60 coordinates GTP. Residue glycine 64 coordinates S-adenosyl-L-methionine. Threonine 91 serves as a coordination point for GTP. Serine 115 lines the S-adenosyl-L-methionine pocket. A GTP-binding site is contributed by lysine 155. Methionine 189 contacts S-adenosyl-L-methionine. [4Fe-4S] cluster contacts are provided by cysteine 260 and cysteine 263. Position 265 to 267 (265 to 267) interacts with GTP; the sequence is RMR. Cysteine 277 contributes to the [4Fe-4S] cluster binding site.

This sequence belongs to the radical SAM superfamily. MoaA family. Monomer and homodimer. Requires [4Fe-4S] cluster as cofactor.

The enzyme catalyses GTP + AH2 + S-adenosyl-L-methionine = (8S)-3',8-cyclo-7,8-dihydroguanosine 5'-triphosphate + 5'-deoxyadenosine + L-methionine + A + H(+). The protein operates within cofactor biosynthesis; molybdopterin biosynthesis. Functionally, catalyzes the cyclization of GTP to (8S)-3',8-cyclo-7,8-dihydroguanosine 5'-triphosphate. This is GTP 3',8-cyclase from Crocosphaera subtropica (strain ATCC 51142 / BH68) (Cyanothece sp. (strain ATCC 51142)).